Consider the following 445-residue polypeptide: tRNA modification GTPase MnmE (445 aa).

Positions 20, 79, and 119 each coordinate (6S)-5-formyl-5,6,7,8-tetrahydrofolate. One can recognise a TrmE-type G domain in the interval 215 to 371; the sequence is GLKLAIIGPP…ILKNIENIAE (157 aa). Residue asparagine 225 participates in K(+) binding. Residues 225 to 230, 244 to 250, and 269 to 272 contribute to the GTP site; these read NTGKSS, SNIAGTT, and DTAG. Serine 229 contacts Mg(2+). K(+)-binding residues include serine 244, isoleucine 246, and threonine 249. Threonine 250 provides a ligand contact to Mg(2+). Residue lysine 445 coordinates (6S)-5-formyl-5,6,7,8-tetrahydrofolate.

This sequence belongs to the TRAFAC class TrmE-Era-EngA-EngB-Septin-like GTPase superfamily. TrmE GTPase family. As to quaternary structure, homodimer. Heterotetramer of two MnmE and two MnmG subunits. K(+) serves as cofactor.

The protein localises to the cytoplasm. Functionally, exhibits a very high intrinsic GTPase hydrolysis rate. Involved in the addition of a carboxymethylaminomethyl (cmnm) group at the wobble position (U34) of certain tRNAs, forming tRNA-cmnm(5)s(2)U34. The polypeptide is tRNA modification GTPase MnmE (Rickettsia prowazekii (strain Madrid E)).